We begin with the raw amino-acid sequence, 475 residues long: UDP-N-acetylmuramate--L-alanine ligase (475 aa).

118-124 (GTHGKTT) serves as a coordination point for ATP.

Belongs to the MurCDEF family.

It is found in the cytoplasm. The catalysed reaction is UDP-N-acetyl-alpha-D-muramate + L-alanine + ATP = UDP-N-acetyl-alpha-D-muramoyl-L-alanine + ADP + phosphate + H(+). It participates in cell wall biogenesis; peptidoglycan biosynthesis. Its function is as follows. Cell wall formation. In Paracoccus denitrificans (strain Pd 1222), this protein is UDP-N-acetylmuramate--L-alanine ligase.